Reading from the N-terminus, the 156-residue chain is Snaclec A2 (156 aa).

A signal peptide spans 1–23; that stretch reads MGRLISVSFGLLVVFLSLSGTGA. Disulfide bonds link cysteine 27-cysteine 38, cysteine 55-cysteine 154, and cysteine 129-cysteine 146. A C-type lectin domain is found at 34–155; the sequence is HEGHCYKVFN…CGQPYRFTCE (122 aa).

Belongs to the snaclec family. As to quaternary structure, heterodimer; disulfide-linked. Expressed by the venom gland.

It localises to the secreted. Interferes with one step of hemostasis (modulation of platelet aggregation, or coagulation cascade, for example). The chain is Snaclec A2 from Macrovipera lebetinus (Levantine viper).